A 124-amino-acid chain; its full sequence is Large ribosomal subunit protein bL12 (124 aa).

Belongs to the bacterial ribosomal protein bL12 family. Homodimer. Part of the ribosomal stalk of the 50S ribosomal subunit. Forms a multimeric L10(L12)X complex, where L10 forms an elongated spine to which 2 to 4 L12 dimers bind in a sequential fashion. Binds GTP-bound translation factors.

Functionally, forms part of the ribosomal stalk which helps the ribosome interact with GTP-bound translation factors. Is thus essential for accurate translation. The polypeptide is Large ribosomal subunit protein bL12 (Chlorobium chlorochromatii (strain CaD3)).